Consider the following 206-residue polypeptide: Na(+)-translocating NADH-quinone reductase subunit E (206 aa).

A run of 6 helical transmembrane segments spans residues 12 to 32, 36 to 56, 85 to 105, 118 to 138, 148 to 168, and 184 to 204; these read AVFV…FLAV, ISSA…TVPV, FLGL…LEMF, GVFL…LFMV, VIYG…LAGI, and LGIT…FSGI.

This sequence belongs to the NqrDE/RnfAE family. Composed of six subunits; NqrA, NqrB, NqrC, NqrD, NqrE and NqrF.

It is found in the cell inner membrane. It carries out the reaction a ubiquinone + n Na(+)(in) + NADH + H(+) = a ubiquinol + n Na(+)(out) + NAD(+). Functionally, NQR complex catalyzes the reduction of ubiquinone-1 to ubiquinol by two successive reactions, coupled with the transport of Na(+) ions from the cytoplasm to the periplasm. NqrA to NqrE are probably involved in the second step, the conversion of ubisemiquinone to ubiquinol. This chain is Na(+)-translocating NADH-quinone reductase subunit E, found in Chromohalobacter salexigens (strain ATCC BAA-138 / DSM 3043 / CIP 106854 / NCIMB 13768 / 1H11).